We begin with the raw amino-acid sequence, 213 residues long: Nicotinate-nucleotide adenylyltransferase (213 aa).

This sequence belongs to the NadD family.

It catalyses the reaction nicotinate beta-D-ribonucleotide + ATP + H(+) = deamido-NAD(+) + diphosphate. Its pathway is cofactor biosynthesis; NAD(+) biosynthesis; deamido-NAD(+) from nicotinate D-ribonucleotide: step 1/1. Catalyzes the reversible adenylation of nicotinate mononucleotide (NaMN) to nicotinic acid adenine dinucleotide (NaAD). This is Nicotinate-nucleotide adenylyltransferase from Salmonella typhimurium (strain LT2 / SGSC1412 / ATCC 700720).